We begin with the raw amino-acid sequence, 244 residues long: Uridylate kinase (244 aa).

15–18 (KLSG) contributes to the ATP binding site. Residues 23 to 28 (GSEGFG) are involved in allosteric activation by GTP. Glycine 57 provides a ligand contact to UMP. Residues glycine 58 and arginine 62 each contribute to the ATP site. Residues aspartate 77 and 138 to 145 (TGNPFFTT) each bind UMP. Residues threonine 165, phenylalanine 171, and aspartate 174 each contribute to the ATP site.

Belongs to the UMP kinase family. In terms of assembly, homohexamer.

The protein resides in the cytoplasm. It carries out the reaction UMP + ATP = UDP + ADP. It functions in the pathway pyrimidine metabolism; CTP biosynthesis via de novo pathway; UDP from UMP (UMPK route): step 1/1. Allosterically activated by GTP. Inhibited by UTP. Catalyzes the reversible phosphorylation of UMP to UDP. The protein is Uridylate kinase of Aeromonas hydrophila subsp. hydrophila (strain ATCC 7966 / DSM 30187 / BCRC 13018 / CCUG 14551 / JCM 1027 / KCTC 2358 / NCIMB 9240 / NCTC 8049).